Reading from the N-terminus, the 466-residue chain is Dynein axonemal assembly factor 11 (466 aa).

LRR repeat units lie at residues 22 to 43, 45 to 66, 67 to 88, and 89 to 110; these read SLEELSLHQQEIERLEHIDKWC, DLKILYLQNNLIGKIENVSKLK, KLEYLNLALNNIEKIENLEGCE, and ELAKLDLTVNFIGELSSIKNLQ. The LRRCT domain occupies 123–161; that stretch reads NPCASFDHYREFVVATLPQLKWLDGKEIEPSERIKALQD. Residues 178–204 are a coiled coil; the sequence is LKRAKLKEEAQRKHQEEDKNEDKRSNA. The span at 185–202 shows a compositional bias: basic and acidic residues; sequence EEAQRKHQEEDKNEDKRS. 3 disordered regions span residues 185 to 206, 268 to 288, and 391 to 466; these read EEAQRKHQEEDKNEDKRSNAGF, MEKQRKKQEKLSEKKKKVKPP, and AFKS…PPLI. Positions 269-287 are enriched in basic residues; sequence EKQRKKQEKLSEKKKKVKP. Positions 301-396 constitute a CS domain; it reads VNEPKIDFSL…GGQRAFKSMK (96 aa). Basic and acidic residues-rich tracts occupy residues 398 to 425 and 433 to 445; these read TSDRSREQTNTRSKHMEKLEVDPSKHSF and QEKKHTPRRRPEP. Over residues 450–460 the composition is skewed to acidic residues; that stretch reads SEEDPTFEDNP.

The protein belongs to the tilB family. Interacts (via CS domain) with ZMYND10 (via C-terminus). As to expression, expressed predominantly in testis and in nasal epithelial cells.

The protein localises to the cytoplasm. It localises to the cell projection. It is found in the cilium. Its subcellular location is the dynein axonemal particle. The protein resides in the flagellum. In terms of biological role, involved in dynein arm assembly, is important for expression and transporting outer dynein arm (ODA) proteins from the cytoplasm to the cilia. Acts as a crucial component in the formation and motility of spermatozoal flagella. The polypeptide is Dynein axonemal assembly factor 11 (Homo sapiens (Human)).